An 846-amino-acid polypeptide reads, in one-letter code: Spindle pole body component SPC98 (846 aa).

Residues serine 124 and serine 136 each carry the phosphoserine modification.

This sequence belongs to the TUBGCP family. As to quaternary structure, interacts with TUB4, SPC72 and SPC97.

Its subcellular location is the nucleus. The protein localises to the cytoplasm. It localises to the cytoskeleton. It is found in the microtubule organizing center. The protein resides in the spindle pole body. Its function is as follows. Involved in microtubule organization by the microtubule organizing center, the spindle pole body (SPB). Probably part of the microtubule attachment site at the SPB. The protein is Spindle pole body component SPC98 (SPC98) of Saccharomyces cerevisiae (strain ATCC 204508 / S288c) (Baker's yeast).